The sequence spans 1264 residues: ATP-dependent helicase/nuclease subunit A (1264 aa).

Residues 12-482 form the UvrD-like helicase ATP-binding domain; the sequence is EQFTDSQWQA…IILAENFRSR (471 aa). Residue 33–40 participates in ATP binding; it reads ASAGSGKT. Residues 520 to 808 enclose the UvrD-like helicase C-terminal domain; sequence SEAADYSTEL…RVMTIHASKG (289 aa).

The protein belongs to the helicase family. AddA subfamily. As to quaternary structure, heterodimer of AddA and AddB/RexB. Requires Mg(2+) as cofactor.

The enzyme catalyses Couples ATP hydrolysis with the unwinding of duplex DNA by translocating in the 3'-5' direction.. It carries out the reaction ATP + H2O = ADP + phosphate + H(+). Its function is as follows. The heterodimer acts as both an ATP-dependent DNA helicase and an ATP-dependent, dual-direction single-stranded exonuclease. Recognizes the chi site generating a DNA molecule suitable for the initiation of homologous recombination. The AddA nuclease domain is required for chi fragment generation; this subunit has the helicase and 3' -&gt; 5' nuclease activities. This Enterococcus faecalis (strain ATCC 700802 / V583) protein is ATP-dependent helicase/nuclease subunit A.